A 182-amino-acid chain; its full sequence is Protein SYM1 (182 aa).

3 helical membrane-spanning segments follow: residues threonine 51–tyrosine 70, leucine 98–glycine 118, and leucine 135–valine 155.

It belongs to the peroxisomal membrane protein PXMP2/4 family.

The protein resides in the mitochondrion inner membrane. In terms of biological role, may be involved in cellular response to stress. Required to maintain mitochondrial DNA (mtDNA) integrity and stability. The protein is Protein SYM1 (SYM1) of Eremothecium gossypii (strain ATCC 10895 / CBS 109.51 / FGSC 9923 / NRRL Y-1056) (Yeast).